A 621-amino-acid chain; its full sequence is Type 2 DNA topoisomerase 6 subunit B (621 aa).

ATP contacts are provided by residues Asn48, Asp80, 101–102 (SR), 111–118 (GQQGIGIS), and Lys435.

This sequence belongs to the TOP6B family. In terms of assembly, homodimer. Heterotetramer of two Top6A and two Top6B chains.

It carries out the reaction ATP-dependent breakage, passage and rejoining of double-stranded DNA.. Its function is as follows. Relaxes both positive and negative superturns and exhibits a strong decatenase activity. The protein is Type 2 DNA topoisomerase 6 subunit B of Methanosarcina acetivorans (strain ATCC 35395 / DSM 2834 / JCM 12185 / C2A).